A 123-amino-acid chain; its full sequence is Integration host factor subunit alpha (123 aa).

Residues 97 to 123 form a disordered region; it reads NANGTASSMSSSANAAAGDKSESASGT. A compositionally biased stretch (low complexity) spans 102–113; the sequence is ASSMSSSANAAA.

Belongs to the bacterial histone-like protein family. As to quaternary structure, heterodimer of an alpha and a beta chain.

In terms of biological role, this protein is one of the two subunits of integration host factor, a specific DNA-binding protein that functions in genetic recombination as well as in transcriptional and translational control. The sequence is that of Integration host factor subunit alpha from Rhodopseudomonas palustris (strain HaA2).